The following is an 867-amino-acid chain: Respiratory burst oxidase homolog protein B (867 aa).

A compositionally biased stretch (basic and acidic residues) spans 1–13 (MEIENTRDSDSMR). Positions 1–20 (MEIENTRDSDSMRGSRVGFS) are disordered. Residues 1–322 (MEIENTRDSD…DYFIEDNWKR (322 aa)) are Cytoplasmic-facing. 2 positions are modified to phosphoserine; by CPK: Ser82 and Ser97. EF-hand-like stretches follow at residues 141–149 (AVNGMLTKS) and 175–186 (RCITSPAVTKDE). EF-hand domains follow at residues 198–233 (SFDA…SASA) and 242–277 (NSDE…APSH). Ca(2+) is bound by residues Asp211, Asp213, Asp215, Arg217, and Glu222. The chain crosses the membrane as a helical span at residues 323–343 (IWVMALWLSICAGLFTWKFIQ). Topologically, residues 344 to 358 (YKRRAVFDVMGYCVS) are extracellular. The helical transmembrane segment at 359-379 (VAKGGAETTKFNMALVLLPVC) threads the bilayer. In terms of domain architecture, Ferric oxidoreductase spans 361 to 519 (KGGAETTKFN…LFVIVYVLFI (159 aa)). Topologically, residues 380 to 407 (RNTITWLRSRTKLGKIIPFDDNINFHKV) are cytoplasmic. The helical transmembrane segment at 408–428 (IAFGIAVGVGLHAISHLTCDF) threads the bilayer. Residues 429-463 (PRLLHATDEEYEPMKPFFGDERPNNYWWFVKGTEG) are Extracellular-facing. A helical membrane pass occupies residues 464–484 (WTGVVMVVLMIIAYVLAQPWF). The Cytoplasmic portion of the chain corresponds to 485–506 (RRNRLNLPSTIKKLTGFNAFWY). The helical transmembrane segment at 507–527 (SHHLFVIVYVLFIIHGYFLYL) threads the bilayer. Residues 528-686 (SKKWYKKTTW…APAQDYKKYD (159 aa)) lie on the Extracellular side of the membrane. An FAD-binding FR-type domain is found at 558 to 681 (SGYKAVKILK…DGPYGAPAQD (124 aa)). The chain crosses the membrane as a helical span at residues 687–707 (VVLLVGLGIGATPLISIVKDV). Residues 708-867 (LNNIKQQKNI…TKFEFHKENF (160 aa)) are Cytoplasmic-facing.

It belongs to the RBOH (TC 5.B.1.3) family. As to quaternary structure, monomer and homodimer. Phosphorylation at Ser-82 and Ser-97 is required for full activity of RBOHB. Not phosphorylated at Ser-89. Phosphorylation at Ser-82 is induced by fungal elicitor treatment.

Its subcellular location is the cell membrane. Its activity is regulated as follows. Inhibited by diphenylene iodinium (DPI). In terms of biological role, calcium-dependent NADPH oxidase that generates superoxide. Involved in the massive phase II oxidative burst induced by pathogen infection. This is Respiratory burst oxidase homolog protein B (RBOHB) from Solanum tuberosum (Potato).